The sequence spans 152 residues: Xanthine-guanine phosphoribosyltransferase (152 aa).

5-phospho-alpha-D-ribose 1-diphosphate-binding positions include 37 to 38 (RG), R69, and 88 to 96 (DDLVDTGGT). Residue R69 participates in GMP binding. D89 lines the Mg(2+) pocket. D92 and I135 together coordinate guanine. D92 and I135 together coordinate xanthine. Residues 92-96 (DTGGT) and 134-135 (WI) contribute to the GMP site.

It belongs to the purine/pyrimidine phosphoribosyltransferase family. XGPT subfamily. In terms of assembly, homotetramer. Requires Mg(2+) as cofactor.

Its subcellular location is the cell inner membrane. The catalysed reaction is GMP + diphosphate = guanine + 5-phospho-alpha-D-ribose 1-diphosphate. The enzyme catalyses XMP + diphosphate = xanthine + 5-phospho-alpha-D-ribose 1-diphosphate. It carries out the reaction IMP + diphosphate = hypoxanthine + 5-phospho-alpha-D-ribose 1-diphosphate. It participates in purine metabolism; GMP biosynthesis via salvage pathway; GMP from guanine: step 1/1. Its pathway is purine metabolism; XMP biosynthesis via salvage pathway; XMP from xanthine: step 1/1. Functionally, purine salvage pathway enzyme that catalyzes the transfer of the ribosyl-5-phosphate group from 5-phospho-alpha-D-ribose 1-diphosphate (PRPP) to the N9 position of the 6-oxopurines guanine and xanthine to form the corresponding ribonucleotides GMP (guanosine 5'-monophosphate) and XMP (xanthosine 5'-monophosphate), with the release of PPi. To a lesser extent, also acts on hypoxanthine. The protein is Xanthine-guanine phosphoribosyltransferase of Escherichia coli (strain UTI89 / UPEC).